The sequence spans 1382 residues: DNA-directed RNA polymerase subunit beta' (1382 aa).

Residues Cys70, Cys72, Cys85, and Cys88 each coordinate Zn(2+). Residues Asp460, Asp462, and Asp464 each coordinate Mg(2+). Zn(2+) contacts are provided by Cys808, Cys882, Cys889, and Cys892.

The protein belongs to the RNA polymerase beta' chain family. As to quaternary structure, the RNAP catalytic core consists of 2 alpha, 1 beta, 1 beta' and 1 omega subunit. When a sigma factor is associated with the core the holoenzyme is formed, which can initiate transcription. Mg(2+) serves as cofactor. The cofactor is Zn(2+).

It carries out the reaction RNA(n) + a ribonucleoside 5'-triphosphate = RNA(n+1) + diphosphate. Its function is as follows. DNA-dependent RNA polymerase catalyzes the transcription of DNA into RNA using the four ribonucleoside triphosphates as substrates. In Geobacter sp. (strain M21), this protein is DNA-directed RNA polymerase subunit beta'.